Consider the following 539-residue polypeptide: Chaperonin GroEL 2 (539 aa).

ATP-binding positions include threonine 29–proline 32, aspartate 86–threonine 90, glycine 413, asparagine 477–alanine 479, and aspartate 493. The segment at valine 519–histidine 539 is disordered.

Belongs to the chaperonin (HSP60) family. As to quaternary structure, forms a cylinder of 14 subunits composed of two heptameric rings stacked back-to-back. Interacts with the co-chaperonin GroES.

The protein localises to the cytoplasm. It catalyses the reaction ATP + H2O + a folded polypeptide = ADP + phosphate + an unfolded polypeptide.. Together with its co-chaperonin GroES, plays an essential role in assisting protein folding. The GroEL-GroES system forms a nano-cage that allows encapsulation of the non-native substrate proteins and provides a physical environment optimized to promote and accelerate protein folding. This chain is Chaperonin GroEL 2, found in Saccharopolyspora erythraea (strain ATCC 11635 / DSM 40517 / JCM 4748 / NBRC 13426 / NCIMB 8594 / NRRL 2338).